The chain runs to 163 residues: NADH-quinone oxidoreductase subunit I (163 aa).

2 consecutive 4Fe-4S ferredoxin-type domains span residues 53 to 83 and 94 to 123; these read LRRYPNGEERCIACKLCEAICPAQAITIEAG and VRYDIDMVKCIYCGFCQEACPVEAIVEGPN. [4Fe-4S] cluster contacts are provided by C63, C66, C69, C73, C103, C106, C109, and C113.

The protein belongs to the complex I 23 kDa subunit family. As to quaternary structure, NDH-1 is composed of 14 different subunits. Subunits NuoA, H, J, K, L, M, N constitute the membrane sector of the complex. [4Fe-4S] cluster serves as cofactor.

Its subcellular location is the cell inner membrane. It catalyses the reaction a quinone + NADH + 5 H(+)(in) = a quinol + NAD(+) + 4 H(+)(out). Functionally, NDH-1 shuttles electrons from NADH, via FMN and iron-sulfur (Fe-S) centers, to quinones in the respiratory chain. The immediate electron acceptor for the enzyme in this species is believed to be ubiquinone. Couples the redox reaction to proton translocation (for every two electrons transferred, four hydrogen ions are translocated across the cytoplasmic membrane), and thus conserves the redox energy in a proton gradient. In Bartonella tribocorum (strain CIP 105476 / IBS 506), this protein is NADH-quinone oxidoreductase subunit I.